Consider the following 780-residue polypeptide: Gelsolin (780 aa).

A signal peptide spans M1–A25. A disordered region spans residues A28 to S48. The segment at V51–F174 is actin-severing. The stretch at F74–F155 is one Gelsolin-like 1 repeat. Y84 carries the post-translational modification Phosphotyrosine. Ca(2+)-binding residues include G90, D91, E122, D134, G139, and A141. An actin-actin interfilament contact point region spans residues D121–G124. K160–K167 contributes to the a 1,2-diacyl-sn-glycero-3-phospho-(1D-myo-inositol-4,5-bisphosphate) binding site. V170 contacts Ca(2+). R186–R194 contributes to the a 1,2-diacyl-sn-glycero-3-phospho-(1D-myo-inositol-4,5-bisphosphate) binding site. Residues V196–M268 form a Gelsolin-like 2 repeat. G211 and D212 together coordinate Ca(2+). C213 and C226 are disulfide-bonded. Ca(2+)-binding residues include E234, D284, E327, D328, and E352. Positions G244–A286 are disordered. The Gelsolin-like 3 repeat unit spans residues D315–F387. 2 positions are modified to phosphotyrosine: Y407 and Y463. The segment at A432–A780 is actin-binding, Ca-sensitive. The stretch at S453–M534 is one Gelsolin-like 4 repeat. Ca(2+) is bound by residues G469, D470, E500, D512, G517, P519, and T549. The stretch at A576–W640 is one Gelsolin-like 5 repeat. At K582 the chain carries N6-acetyllysine. Ca(2+)-binding residues include N589 and D590. A Phosphotyrosine modification is found at Y601. Position 612 (E612) interacts with Ca(2+). The residue at position 649 (Y649) is a Phosphotyrosine. One copy of the Gelsolin-like 6 repeat lies at I679–F754. Ca(2+) contacts are provided by D694, D695, and E717. T740 is subject to Phosphothreonine.

The protein belongs to the villin/gelsolin family. Binds to actin and to fibronectin. Identified in a complex composed of ACTA1, COBL, GSN and TMSB4X. Interacts with the inactive form of EIF2AK2/PKR. Interacts with FLII. Phosphorylated on tyrosine residues in vitro.

It is found in the secreted. It localises to the cytoplasm. Its subcellular location is the cytoskeleton. Functionally, calcium-regulated, actin-modulating protein that binds to the plus (or barbed) ends of actin monomers or filaments, preventing monomer exchange (end-blocking or capping). It can promote the assembly of monomers into filaments (nucleation) as well as sever filaments already formed. Plays a role in ciliogenesis. The protein is Gelsolin (Gsn) of Rattus norvegicus (Rat).